The following is a 323-amino-acid chain: tRNA N6-adenosine threonylcarbamoyltransferase (323 aa).

Fe cation is bound by residues H106, H110, and Y127. Substrate is bound by residues 127-131 (YVSGA), D159, G172, E176, and N255. D283 lines the Fe cation pocket.

Belongs to the KAE1 / TsaD family. Monomer. Component of the KEOPS complex that consists of Kae1, Bud32, Cgi121 and Pcc1; the whole complex dimerizes. Fe(2+) is required as a cofactor.

The protein localises to the cytoplasm. It carries out the reaction L-threonylcarbamoyladenylate + adenosine(37) in tRNA = N(6)-L-threonylcarbamoyladenosine(37) in tRNA + AMP + H(+). Its function is as follows. Required for the formation of a threonylcarbamoyl group on adenosine at position 37 (t(6)A37) in tRNAs that read codons beginning with adenine. Is a component of the KEOPS complex that is probably involved in the transfer of the threonylcarbamoyl moiety of threonylcarbamoyl-AMP (TC-AMP) to the N6 group of A37. Kae1 likely plays a direct catalytic role in this reaction, but requires other protein(s) of the complex to fulfill this activity. This chain is tRNA N6-adenosine threonylcarbamoyltransferase, found in Methanocella arvoryzae (strain DSM 22066 / NBRC 105507 / MRE50).